The sequence spans 478 residues: POU domain, class 2, transcription factor 2 (478 aa).

5 disordered regions span residues 1–82, 167–199, 275–298, 357–391, and 409–478; these read MVHS…PPQA, QAVTRPTLSDPHLSHPQPPKCLEPPSHPEEASD, SSLPSPNQLSRPSLGFDGLPGRRR, PCSAAPMLPSPGKPASYSPHLVTPQGGAGTLPLSQ, and TLHP…PYQP. Over residues 12 to 37 the composition is skewed to basic and acidic residues; it reads RMSKPLEAEKQGLDSPSEHTDTERNG. The segment covering 38-60 has biased composition (polar residues); sequence PDTNHQNPQNKTSPFSVSPTGPS. Residues 195 to 269 enclose the POU-specific domain; the sequence is EEASDLEELE…LLEKWLNDAE (75 aa). Over residues 275-285 the composition is skewed to polar residues; sequence SSLPSPNQLSR. The homeobox DNA-binding region spans 297 to 356; that stretch reads RRKKRTSIETNVRFALEKSFLANQKPTSEEILLIAEQLHMEKEVIRVWFCNRRQKEKRIN. Residues 389–410 form a leucine-zipper region; sequence LSQASSSLSTTVTTLSSAVGTL. A compositionally biased stretch (gly residues) spans 416–425; sequence AGGGAAGGGA.

Belongs to the POU transcription factor family. Class-2 subfamily. In terms of assembly, interacts with NR3C1, AR and PGR. Interacts with POU2AF1; the interaction increases POU2F2 transactivation activity. As to expression, predominantly expressed in B-cells.

It localises to the nucleus. Its activity is regulated as follows. Transactivation activity is enhanced by transcriptional coactivator POU2AF1. Its function is as follows. Transcription factor that specifically binds to the octamer motif (5'-ATTTGCAT-3'). Regulates IL6 expression in B cells with POU2AF1. Regulates transcription in a number of tissues in addition to activating immunoglobulin gene expression. Modulates transcription transactivation by NR3C1, AR and PGR. The protein is POU domain, class 2, transcription factor 2 (POU2F2) of Sus scrofa (Pig).